Here is a 364-residue protein sequence, read N- to C-terminus: DNA replication and repair protein RecF (364 aa).

Position 30–37 (30–37 (GNNAQGKT)) interacts with ATP.

It belongs to the RecF family.

Its subcellular location is the cytoplasm. Functionally, the RecF protein is involved in DNA metabolism; it is required for DNA replication and normal SOS inducibility. RecF binds preferentially to single-stranded, linear DNA. It also seems to bind ATP. The sequence is that of DNA replication and repair protein RecF from Clostridium botulinum (strain Langeland / NCTC 10281 / Type F).